Consider the following 151-residue polypeptide: SsrA-binding protein (151 aa).

Residues 132 to 151 form a disordered region; that stretch reads KRQTIKKRDQDREIHRKYGI.

Belongs to the SmpB family.

It is found in the cytoplasm. In terms of biological role, required for rescue of stalled ribosomes mediated by trans-translation. Binds to transfer-messenger RNA (tmRNA), required for stable association of tmRNA with ribosomes. tmRNA and SmpB together mimic tRNA shape, replacing the anticodon stem-loop with SmpB. tmRNA is encoded by the ssrA gene; the 2 termini fold to resemble tRNA(Ala) and it encodes a 'tag peptide', a short internal open reading frame. During trans-translation Ala-aminoacylated tmRNA acts like a tRNA, entering the A-site of stalled ribosomes, displacing the stalled mRNA. The ribosome then switches to translate the ORF on the tmRNA; the nascent peptide is terminated with the 'tag peptide' encoded by the tmRNA and targeted for degradation. The ribosome is freed to recommence translation, which seems to be the essential function of trans-translation. The polypeptide is SsrA-binding protein (Lactobacillus gasseri (strain ATCC 33323 / DSM 20243 / BCRC 14619 / CIP 102991 / JCM 1131 / KCTC 3163 / NCIMB 11718 / NCTC 13722 / AM63)).